The sequence spans 209 residues: Large ribosomal subunit protein uL3 (209 aa).

The disordered stretch occupies residues 130-154; the sequence is RGPMSHGSKFHRAVGSMGASSDPSR.

Belongs to the universal ribosomal protein uL3 family. In terms of assembly, part of the 50S ribosomal subunit. Forms a cluster with proteins L14 and L19.

Its function is as follows. One of the primary rRNA binding proteins, it binds directly near the 3'-end of the 23S rRNA, where it nucleates assembly of the 50S subunit. The chain is Large ribosomal subunit protein uL3 from Clostridium kluyveri (strain NBRC 12016).